Consider the following 701-residue polypeptide: Transcription factor PDR8 (701 aa).

The tract at residues 1-22 (MDGSHFPMKSTTGEPVSSGKKG) is disordered. Residues 31–59 (CAFCRKRKLKCSQARPMCQQCVIRKLPQC) constitute a DNA-binding region (zn(2)-C6 fungal-type).

It localises to the cytoplasm. The protein localises to the nucleus. Up-regulates the transcription of the genes for ATP-binding cassette (ABC) transporters YOR1 and PDR15, for major facilitator superfamily transporter AZR1, for pleiotropic drug resistance SNG1, for alpha-glucosidase YJL216C and for YLL056C. The polypeptide is Transcription factor PDR8 (PDR8) (Saccharomyces cerevisiae (strain ATCC 204508 / S288c) (Baker's yeast)).